We begin with the raw amino-acid sequence, 340 residues long: MNLNSPAVSMLGGDTPAHGGPNSVLGGQGPSSILTGHGPNSVMGPNSILGPGSVLNPQSIQPMQSQQMHSLQGSSMQMHSHLANSNLNLNINPASVGPDRNPGSVMHHNLDINPPSVAYQNLTVPMTPLAYSVYDRDALTHQAPASNIAATMVPATPASQLDIPMPALQNIVSTVNLGVQLDLKKIALHARNAEYNPKRFAAVIMRIREPRTTALIFSSGKMVCTGAKSEEASRLAARKYARIVQKLGFQAKFTEFMVQNMVGSCDVRFPIQLEGLCITHSQFSTYEPELFPGLIYRMVKPRVVLLIFVSGKVVITGAKTKRDIDEAFGQIYPILKGFKK.

The disordered stretch occupies residues 1–78; the sequence is MNLNSPAVSM…HSLQGSSMQM (78 aa). Residues 57–68 show a composition bias toward low complexity; it reads PQSIQPMQSQQM. Over residues 69–78 the composition is skewed to polar residues; that stretch reads HSLQGSSMQM. 2 tandem repeats follow at residues 168-244 and 258-335.

Belongs to the TBP family. In terms of assembly, component of the TFIID basal transcription factor complex, composed of TATA-box-binding protein tbp-1, and a number of TBP-associated factors (TAFs). Binds DNA as monomer.

It is found in the nucleus. Its function is as follows. The TFIID basal transcription factor complex plays a major role in the initiation of RNA polymerase II (Pol II)-dependent transcription. TFIID recognizes and binds promoters via its subunit tbp-1, a TATA-box-binding protein, and promotes assembly of the pre-initiation complex (PIC). The TFIID complex consists of tbp-1 and TBP-associated factors (TAFs). General transcription factor that functions at the core of the TFIID complex. The sequence is that of TATA-box-binding protein (tbp-1) from Caenorhabditis elegans.